The primary structure comprises 50 residues: Large ribosomal subunit protein bL33 (50 aa).

This sequence belongs to the bacterial ribosomal protein bL33 family.

This chain is Large ribosomal subunit protein bL33, found in Koribacter versatilis (strain Ellin345).